Here is a 150-residue protein sequence, read N- to C-terminus: Ankyrin repeat protein C18/B24 (150 aa).

The stretch at 41 to 73 (ENKTLLYYAVDVNNIQFAKRLLEYGASVTTSRS) is one ANK repeat.

This is Ankyrin repeat protein C18/B24 from Vaccinia virus (strain Copenhagen) (VACV).